We begin with the raw amino-acid sequence, 159 residues long: 6,7-dimethyl-8-ribityllumazine synthase (159 aa).

Residues F22, 57-59, and 81-83 each bind 5-amino-6-(D-ribitylamino)uracil; these read AVE and AVI. 86-87 serves as a coordination point for (2S)-2-hydroxy-3-oxobutyl phosphate; the sequence is GT. The active-site Proton donor is H89. A 5-amino-6-(D-ribitylamino)uracil-binding site is contributed by F114. R128 provides a ligand contact to (2S)-2-hydroxy-3-oxobutyl phosphate.

This sequence belongs to the DMRL synthase family. Forms an icosahedral capsid composed of 60 subunits, arranged as a dodecamer of pentamers.

The enzyme catalyses (2S)-2-hydroxy-3-oxobutyl phosphate + 5-amino-6-(D-ribitylamino)uracil = 6,7-dimethyl-8-(1-D-ribityl)lumazine + phosphate + 2 H2O + H(+). The protein operates within cofactor biosynthesis; riboflavin biosynthesis; riboflavin from 2-hydroxy-3-oxobutyl phosphate and 5-amino-6-(D-ribitylamino)uracil: step 1/2. Functionally, catalyzes the formation of 6,7-dimethyl-8-ribityllumazine by condensation of 5-amino-6-(D-ribitylamino)uracil with 3,4-dihydroxy-2-butanone 4-phosphate. This is the penultimate step in the biosynthesis of riboflavin. The sequence is that of 6,7-dimethyl-8-ribityllumazine synthase from Shewanella baltica (strain OS155 / ATCC BAA-1091).